The following is a 156-amino-acid chain: Small ribosomal subunit protein uS7 (156 aa).

The protein belongs to the universal ribosomal protein uS7 family. As to quaternary structure, part of the 30S ribosomal subunit. Contacts proteins S9 and S11.

Its function is as follows. One of the primary rRNA binding proteins, it binds directly to 16S rRNA where it nucleates assembly of the head domain of the 30S subunit. Is located at the subunit interface close to the decoding center, probably blocks exit of the E-site tRNA. This Brucella melitensis biotype 1 (strain ATCC 23456 / CCUG 17765 / NCTC 10094 / 16M) protein is Small ribosomal subunit protein uS7.